Here is a 389-residue protein sequence, read N- to C-terminus: Acetyl-CoA decarbonylase/synthase complex subunit delta (389 aa).

This sequence belongs to the CdhD family. Heterodimer of delta and gamma chains. The ACDS complex is made up of alpha, epsilon, beta, gamma and delta chains with a probable stoichiometry of (alpha(2)epsilon(2))(4)-beta(8)-(gamma(1)delta(1))(8).

In terms of biological role, part of a complex that catalyzes the reversible cleavage of acetyl-CoA, allowing autotrophic growth from CO(2). Probably maintains the overall quaternary structure of the ACDS complex. The protein is Acetyl-CoA decarbonylase/synthase complex subunit delta of Methanothermobacter thermautotrophicus (strain ATCC 29096 / DSM 1053 / JCM 10044 / NBRC 100330 / Delta H) (Methanobacterium thermoautotrophicum).